A 327-amino-acid polypeptide reads, in one-letter code: G protein pathway suppressor 2 (327 aa).

A coiled-coil region spans residues 14-109; that stretch reads MARALHRHIM…RRRKEQSDLT (96 aa). Positions 26–65 are disordered; sequence RERKRQEEEEVDKMMEQKMKEEQERRKKKEMEERMSLEET. Residues K45 and K71 each participate in a glycyl lysine isopeptide (Lys-Gly) (interchain with G-Cter in SUMO1) cross-link. The interval 61-94 is interaction with SUMO; the sequence is SLEETKEQILKLQEKLSALQEEKHQLFLQLKKVL. Disordered regions lie at residues 178 to 208, 253 to 285, and 300 to 327; these read GQFQ…SPSQ, QKQM…APGL, and KSGF…FYHK. The span at 253–271 shows a compositional bias: polar residues; that stretch reads QKQMEHANQQTSFSDSSSL. R312 is subject to Asymmetric dimethylarginine. Residues 317–327 are compositionally biased toward polar residues; the sequence is QHSQNPRFYHK. Position 323 is an asymmetric dimethylarginine; alternate (R323). At R323 the chain carries Omega-N-methylarginine; alternate.

Component of the N-Cor repressor complex, at least composed of NCOR1, NCOR2, HDAC3, TBL1X, TBL1R, CORO2A and GPS2. Interacts (when sumoylated at Lys-71) with TBL1X; leading to protect GPS2 from degradation by the proteasome. Interacts with UBE2N; leading to inhibit UBE2N/Ubc13 activity. Interacts with TRAF1. Interacts with TRAF2. Interacts with TRAF6. Interacts with PPARG (when in the liganded conformation). Interacts with (sumoylated) NR1H2; interaction with sumoylated NR1H2 and NR5A2 onto hepatic acute phase protein promoters prevents N-Cor corepressor complex dissociation. Interacts with (sumoylated) NR5A2; interaction with sumoylated NR1H2 and NR5A2 onto hepatic acute phase protein promoters prevents N-Cor corepressor complex dissociation. Interacts with NR1H3. Interacts with RFX4. Interacts with ANKRD26. In terms of processing, sumoylation regulates its subcellular location. Sumoylation at Lys-45 and Lys-71 regulates the shuttling between the cytoplasm and the nucleus. Sumoylation at Lys-71 is required for interaction with TBL1X. Sumoylated at Lys-45 and Lys-71 in mitochondrion. Desumoylation by SENP1 leads to relocation from the mitochondria to the nucleus. Ubiquitinated at the C-terminus by SIAH2; leading to its degradation by the proteasome. Interaction with TBL1X and methylation at Arg-323 protect GPS2 against ubiquitination and degradation. Post-translationally, methylated at Arg-312 and Arg-323 by PRMT6. Methylation at Arg-323 protects from degradation by the proteasome.

It localises to the nucleus. Its subcellular location is the mitochondrion. The protein resides in the cytoplasm. It is found in the cytosol. Key regulator of inflammation, lipid metabolism and mitochondrion homeostasis that acts by inhibiting the activity of the ubiquitin-conjugating enzyme UBE2N/Ubc13, thereby inhibiting 'Lys-63'-linked ubiquitination. In the nucleus, can both acts as a corepressor and coactivator of transcription, depending on the context. Acts as a transcription coactivator in adipocytes by promoting the recruitment of PPARG to promoters: acts by inhibiting the activity of the ubiquitin-conjugating enzyme UBE2N/Ubc13, leading to stabilization of KDM4A and subsequent histone H3 'Lys-9' (H3K9) demethylation. Promotes cholesterol efflux by acting as a transcription coactivator. Acts as a regulator of B-cell development by inhibiting UBE2N/Ubc13, thereby restricting the activation of Toll-like receptors (TLRs) and B-cell antigen receptors (BCRs) signaling pathways. Acts as a key mediator of mitochondrial stress response: in response to mitochondrial depolarization, relocates from the mitochondria to the nucleus following desumoylation and specifically promotes expression of nuclear-encoded mitochondrial genes. Promotes transcription of nuclear-encoded mitochondrial genes by inhibiting UBE2N/Ubc13. Can also act as a corepressor as part of the N-Cor repressor complex by repressing active PPARG. Plays an anti-inflammatory role in macrophages and is required for insulin sensitivity by acting as a corepressor. Plays an anti-inflammatory role during the hepatic acute phase response by interacting with sumoylated NR1H2 and NR5A2 proteins, thereby preventing N-Cor corepressor complex dissociation. In the cytosol, also plays a non-transcriptional role by regulating insulin signaling and pro-inflammatory pathways. In the cytoplasm, acts as a negative regulator of inflammation by inhibiting the pro-inflammatory TNF-alpha pathway; acts by repressing UBE2N/Ubc13 activity. In the cytoplasm of adipocytes, restricts the activation of insulin signaling via inhibition of UBE2N/Ubc13-mediated ubiquitination of AKT. Able to suppress G-protein- and mitogen-activated protein kinase-mediated signal transduction. The protein is G protein pathway suppressor 2 of Mus musculus (Mouse).